The following is a 395-amino-acid chain: Elongation factor Tu (395 aa).

Residues 6–205 form the tr-type G domain; it reads KPHINVGTIG…NALEKISLPT (200 aa). The G1 stretch occupies residues 15–22; sequence GHVDHGKT. GTP is bound at residue 15-22; sequence GHVDHGKT. T22 lines the Mg(2+) pocket. Positions 59 to 63 are G2; that stretch reads GITIS. The tract at residues 80-83 is G3; that stretch reads DCPG. Residues 80–84 and 135–138 each bind GTP; these read DCPGH and NKCD. Residues 135 to 138 are G4; it reads NKCD. The tract at residues 173-175 is G5; the sequence is SAV.

This sequence belongs to the TRAFAC class translation factor GTPase superfamily. Classic translation factor GTPase family. EF-Tu/EF-1A subfamily. As to quaternary structure, monomer.

It is found in the cytoplasm. It carries out the reaction GTP + H2O = GDP + phosphate + H(+). Functionally, GTP hydrolase that promotes the GTP-dependent binding of aminoacyl-tRNA to the A-site of ribosomes during protein biosynthesis. This Ehrlichia chaffeensis (strain ATCC CRL-10679 / Arkansas) protein is Elongation factor Tu.